Here is an 85-residue protein sequence, read N- to C-terminus: Defensin-like protein 76 (85 aa).

A signal peptide spans 1 to 27 (MQNQKHSHILTAITIVLLFAMAAKINA). 4 cysteine pairs are disulfide-bonded: cysteine 35–cysteine 70, cysteine 40–cysteine 59, cysteine 44–cysteine 68, and cysteine 48–cysteine 69.

It belongs to the DEFL family.

Its subcellular location is the secreted. This chain is Defensin-like protein 76 (LCR86), found in Arabidopsis thaliana (Mouse-ear cress).